Consider the following 445-residue polypeptide: C4-dicarboxylate transport protein (445 aa).

Helical transmembrane passes span 24–44 (VLYV…WLSP), 62–82 (LIKM…IAHI), 105–125 (FALV…GLAA), 163–183 (GDIL…MALG), 201–221 (FGVI…AMAF), 234–254 (LIGL…LVLG), 322–342 (IYMT…LSFG), and 370–390 (AGTL…VFSI).

This sequence belongs to the dicarboxylate/amino acid:cation symporter (DAACS) (TC 2.A.23) family.

The protein resides in the cell inner membrane. Responsible for the transport of dicarboxylates such as succinate, fumarate, and malate from the periplasm across the membrane. In Rhodopseudomonas palustris (strain ATCC BAA-98 / CGA009), this protein is C4-dicarboxylate transport protein.